Consider the following 77-residue polypeptide: Homeodomain-only protein (77 aa).

Positions 7 to 65 (AALGVRLTEDQVKVLEENFTKVSKHPDETTLMLIAAECGLSEEQTAVWFRMRNAQWRKA) form a DNA-binding region, homeobox; degenerate.

The protein localises to the nucleus. It is found in the cytoplasm. In terms of biological role, atypical homeodomain protein which does not bind DNA and is required to modulate cardiac growth and development. May act via an interaction with SRF, leading to modulate the expression of SRF-dependent cardiac-specific genes and cardiac development. May act as a co-chaperone for HSPA1A and HSPA1B chaperone proteins and assist in chaperone-mediated protein refolding. This is Homeodomain-only protein (hopx) from Danio rerio (Zebrafish).